The following is a 311-amino-acid chain: Porphobilinogen deaminase (311 aa).

C241 carries the S-(dipyrrolylmethanemethyl)cysteine modification.

Belongs to the HMBS family. In terms of assembly, monomer. Requires dipyrromethane as cofactor.

The catalysed reaction is 4 porphobilinogen + H2O = hydroxymethylbilane + 4 NH4(+). The protein operates within porphyrin-containing compound metabolism; protoporphyrin-IX biosynthesis; coproporphyrinogen-III from 5-aminolevulinate: step 2/4. Functionally, tetrapolymerization of the monopyrrole PBG into the hydroxymethylbilane pre-uroporphyrinogen in several discrete steps. This chain is Porphobilinogen deaminase, found in Geobacillus sp. (strain WCH70).